A 123-amino-acid polypeptide reads, in one-letter code: Thioredoxin H-type 1 (123 aa).

Residue A2 is modified to N-acetylalanine. Positions A2 to Q119 constitute a Thioredoxin domain. The cysteines at positions 45 and 48 are disulfide-linked.

The protein belongs to the thioredoxin family. Plant H-type subfamily.

The protein resides in the cytoplasm. Its function is as follows. Participates in various redox reactions through the reversible oxidation of the active center dithiol to a disulfide. The H form is known to activate a number of cytosolic enzymes. The sequence is that of Thioredoxin H-type 1 (THL-1) from Brassica napus (Rape).